We begin with the raw amino-acid sequence, 143 residues long: Transthyretin-like protein 33 (143 aa).

A signal peptide spans 1 to 20; the sequence is MSRLACISSLFILCAIGSEA.

It belongs to the nematode transthyretin-like family. As to expression, expressed in head cells next to and anterior of the first pharyngeal bulb, the pharynx, and the hypodermis.

The protein resides in the secreted. Functionally, protects dopaminergic neurons from degeneration caused by oxidative stress. The chain is Transthyretin-like protein 33 from Caenorhabditis elegans.